A 333-amino-acid polypeptide reads, in one-letter code: GTPase Obg (333 aa).

The Obg domain maps to 4–162 (GNFVDYVKIY…MDVILELKVL (159 aa)). The OBG-type G domain occupies 163-332 (ADVGLVGFPN…LKDKLWKMLN (170 aa)). Residues 169–176 (GFPNAGKS), 194–198 (FTTLK), 216–219 (DIPG), 283–286 (SKCD), and 313–315 (SSV) each bind GTP. S176 and T196 together coordinate Mg(2+).

This sequence belongs to the TRAFAC class OBG-HflX-like GTPase superfamily. OBG GTPase family. Monomer. It depends on Mg(2+) as a cofactor.

It localises to the cytoplasm. An essential GTPase which binds GTP, GDP and possibly (p)ppGpp with moderate affinity, with high nucleotide exchange rates and a fairly low GTP hydrolysis rate. Plays a role in control of the cell cycle, stress response, ribosome biogenesis and in those bacteria that undergo differentiation, in morphogenesis control. This is GTPase Obg from Flavobacterium johnsoniae (strain ATCC 17061 / DSM 2064 / JCM 8514 / BCRC 14874 / CCUG 350202 / NBRC 14942 / NCIMB 11054 / UW101) (Cytophaga johnsonae).